The sequence spans 317 residues: MTDKLTSLRQITTVVADTGDIAAMKLYQPQDATTNPSIILNAAQIPEYRKLIDEAIAWAREQSSDHAQQIIDATDKLAVNIGLEILKLIPGRISTEVDARLSYDTVASVTKAKRLIKLYNEAGISNDRILIKLASTWQGIRAAEQLEKEGINCNLTLLFSFAQARACAEAGVFLISPFVGRILDWYKANGDQKEFAPSEDPGVVSVTEIYQYYKKHGYKTVVMGASFRNLGEIIELAGCDRLTIAPSLLKELAESEGPVERKLAYTGEIQAKPAPLTEAEFYWQHNQDPMAVDKLADGIRKFAIDQGKLEKMISDLL.

The active-site Schiff-base intermediate with substrate is the Lys132.

Belongs to the transaldolase family. Type 1 subfamily. Homodimer.

The protein localises to the cytoplasm. It carries out the reaction D-sedoheptulose 7-phosphate + D-glyceraldehyde 3-phosphate = D-erythrose 4-phosphate + beta-D-fructose 6-phosphate. It participates in carbohydrate degradation; pentose phosphate pathway; D-glyceraldehyde 3-phosphate and beta-D-fructose 6-phosphate from D-ribose 5-phosphate and D-xylulose 5-phosphate (non-oxidative stage): step 2/3. Its function is as follows. Transaldolase is important for the balance of metabolites in the pentose-phosphate pathway. The protein is Transaldolase of Yersinia pseudotuberculosis serotype IB (strain PB1/+).